Reading from the N-terminus, the 183-residue chain is MTTNGFDINDLKRRMDGAKESLRYELGGLRTGRAAISMLEPVQVEAYGSHMPLNQVATVSVPEPRLLSVQVWDKSMVKAVETAIVNSNLGLNPATEGQVIRLRIPELNEERRKELVKVAHKYAEAARVAVRHVRRDGLDIVKKDKMSEDEQERASGEIQKVTDAAIADIDKLLATKEKEILTV.

The protein belongs to the RRF family.

It is found in the cytoplasm. Responsible for the release of ribosomes from messenger RNA at the termination of protein biosynthesis. May increase the efficiency of translation by recycling ribosomes from one round of translation to another. This chain is Ribosome-recycling factor, found in Afipia carboxidovorans (strain ATCC 49405 / DSM 1227 / KCTC 32145 / OM5) (Oligotropha carboxidovorans).